Consider the following 147-residue polypeptide: UPF0208 membrane protein CGSHiEE_06015 (147 aa).

2 helical membrane passes run 38–58 (FAQK…QIYA) and 67–87 (IAIL…YWLG).

Belongs to the UPF0208 family.

Its subcellular location is the cell inner membrane. The chain is UPF0208 membrane protein CGSHiEE_06015 from Haemophilus influenzae (strain PittEE).